The following is a 237-amino-acid chain: Sensory rhodopsin-2 (237 aa).

Over 1–2 (MA) the chain is Extracellular. Residues 3–23 (LTTWFWVGAVGMLAGTVLPIR) form a helical membrane-spanning segment. Residues 24-31 (DCIRHPSH) are Cytoplasmic-facing. A helical transmembrane segment spans residues 32–53 (RRYDLVLAGITGLAAIAYTTMG). Residues 54-67 (LGITATTVGDRTVY) are Extracellular-facing. A helical transmembrane segment spans residues 68–89 (LARYIDWLVTTPLIVLYLAMLA). The Cytoplasmic segment spans residues 90–92 (RPG). A helical transmembrane segment spans residues 93-115 (HRTSAWLLAADVFVIAAGIAAAL). At 116–119 (TTGV) the chain is on the extracellular side. The chain crosses the membrane as a helical span at residues 120–147 (QRWLFFAVGAAGYAALLYGLLGTLPRAL). Over 148–150 (GDD) the chain is Cytoplasmic. A helical membrane pass occupies residues 151–178 (PRVRSLFVTLRNITVVLWTLYPVVWLLS). The Extracellular segment spans residues 179–186 (PAGIGILQ). A helical membrane pass occupies residues 187–214 (TEMYTIVVVYLDFISKVAFVAFAVLGAD). K202 bears the N6-(retinylidene)lysine mark. At 215–237 (AVSRLVAADAAAPATAEPTPDGD) the chain is on the cytoplasmic side.

This sequence belongs to the archaeal/bacterial/fungal opsin family. Interacts with HTR-II.

It localises to the cell membrane. In terms of biological role, photophobic photoreceptor responsible for the negative phototaxis. Activates the sensory rhodopsin II transducer (HTR-II) in response to blue light. The protein is Sensory rhodopsin-2 (sop2) of Halobacterium salinarum (strain ATCC 700922 / JCM 11081 / NRC-1) (Halobacterium halobium).